We begin with the raw amino-acid sequence, 427 residues long: Dihydroorotase (427 aa).

Residues histidine 60 and histidine 62 each coordinate Zn(2+). Substrate is bound by residues 62 to 64 and asparagine 94; that span reads HLR. Zn(2+) is bound by residues aspartate 151, histidine 178, and histidine 231. Position 277 (asparagine 277) interacts with substrate. Zn(2+) is bound at residue aspartate 304. The active site involves aspartate 304. Substrate-binding positions include histidine 308 and 322 to 323; that span reads FG.

It belongs to the metallo-dependent hydrolases superfamily. DHOase family. Class I DHOase subfamily. The cofactor is Zn(2+).

It catalyses the reaction (S)-dihydroorotate + H2O = N-carbamoyl-L-aspartate + H(+). Its pathway is pyrimidine metabolism; UMP biosynthesis via de novo pathway; (S)-dihydroorotate from bicarbonate: step 3/3. Its function is as follows. Catalyzes the reversible cyclization of carbamoyl aspartate to dihydroorotate. This is Dihydroorotase from Pelotomaculum thermopropionicum (strain DSM 13744 / JCM 10971 / SI).